The primary structure comprises 293 residues: Bifunctional protein FolD (293 aa).

NADP(+)-binding positions include 165–167 (GRS), Ser190, and Ile231.

Belongs to the tetrahydrofolate dehydrogenase/cyclohydrolase family. Homodimer.

It catalyses the reaction (6R)-5,10-methylene-5,6,7,8-tetrahydrofolate + NADP(+) = (6R)-5,10-methenyltetrahydrofolate + NADPH. It carries out the reaction (6R)-5,10-methenyltetrahydrofolate + H2O = (6R)-10-formyltetrahydrofolate + H(+). It functions in the pathway one-carbon metabolism; tetrahydrofolate interconversion. Catalyzes the oxidation of 5,10-methylenetetrahydrofolate to 5,10-methenyltetrahydrofolate and then the hydrolysis of 5,10-methenyltetrahydrofolate to 10-formyltetrahydrofolate. This Synechococcus sp. (strain CC9902) protein is Bifunctional protein FolD.